The primary structure comprises 280 residues: S-methyl-5'-thioadenosine phosphorylase (280 aa).

Phosphate-binding positions include S18, 60–61 (RH), and 93–94 (TA). M196 is a substrate binding site. Residue T197 participates in phosphate binding. 220–222 (DYD) contributes to the substrate binding site.

It belongs to the PNP/MTAP phosphorylase family. MTAP subfamily. As to quaternary structure, homotrimer.

It is found in the cytoplasm. It localises to the nucleus. The catalysed reaction is S-methyl-5'-thioadenosine + phosphate = 5-(methylsulfanyl)-alpha-D-ribose 1-phosphate + adenine. The protein operates within amino-acid biosynthesis; L-methionine biosynthesis via salvage pathway; S-methyl-5-thio-alpha-D-ribose 1-phosphate from S-methyl-5'-thioadenosine (phosphorylase route): step 1/1. Its function is as follows. Catalyzes the reversible phosphorylation of S-methyl-5'-thioadenosine (MTA) to adenine and 5-methylthioribose-1-phosphate. Involved in the breakdown of MTA, a major by-product of polyamine biosynthesis. Responsible for the first step in the methionine salvage pathway after MTA has been generated from S-adenosylmethionine. Has broad substrate specificity with 6-aminopurine nucleosides as preferred substrates. The protein is S-methyl-5'-thioadenosine phosphorylase of Ciona intestinalis (Transparent sea squirt).